The chain runs to 354 residues: Uroporphyrinogen decarboxylase (354 aa).

Substrate contacts are provided by residues 27-31 (RQAGR), aspartate 77, tyrosine 154, serine 209, and histidine 327.

This sequence belongs to the uroporphyrinogen decarboxylase family. Homodimer.

It is found in the cytoplasm. The catalysed reaction is uroporphyrinogen III + 4 H(+) = coproporphyrinogen III + 4 CO2. It participates in porphyrin-containing compound metabolism; protoporphyrin-IX biosynthesis; coproporphyrinogen-III from 5-aminolevulinate: step 4/4. Functionally, catalyzes the decarboxylation of four acetate groups of uroporphyrinogen-III to yield coproporphyrinogen-III. The sequence is that of Uroporphyrinogen decarboxylase from Shewanella amazonensis (strain ATCC BAA-1098 / SB2B).